The chain runs to 290 residues: Nucleoid occlusion protein (290 aa).

A DNA-binding region (H-T-H motif) is located at residues 153–172 (EALAQRLGKGQSTIANKLRL).

Belongs to the ParB family.

The protein resides in the cytoplasm. It localises to the nucleoid. In terms of biological role, effects nucleoid occlusion by binding relatively nonspecifically to DNA and preventing the assembly of the division machinery in the vicinity of the nucleoid, especially under conditions that disturb the cell cycle. It helps to coordinate cell division and chromosome segregation by preventing the formation of the Z ring through the nucleoid, which would cause chromosome breakage. The protein is Nucleoid occlusion protein of Bacillus cytotoxicus (strain DSM 22905 / CIP 110041 / 391-98 / NVH 391-98).